Here is a 335-residue protein sequence, read N- to C-terminus: Glucokinase (335 aa).

Residue 11-16 coordinates ATP; sequence ADIGGT.

This sequence belongs to the bacterial glucokinase family.

It is found in the cytoplasm. It catalyses the reaction D-glucose + ATP = D-glucose 6-phosphate + ADP + H(+). The sequence is that of Glucokinase from Xanthomonas axonopodis pv. citri (strain 306).